We begin with the raw amino-acid sequence, 89 residues long: MSQERVDKLRKLRIEFEGIIQRMEVAKNLLRELEETTDRVRVDRLQMEVGFLRDYADINCMIEKDRIKEQSSSSSATRTTQEPSLHLPD.

The segment at 66 to 89 (RIKEQSSSSSATRTTQEPSLHLPD) is disordered.

This is an uncharacterized protein from Cestrum parqui (CmYLCV).